A 397-amino-acid polypeptide reads, in one-letter code: Tryptophan synthase beta chain (397 aa).

The residue at position 86 (K86) is an N6-(pyridoxal phosphate)lysine.

It belongs to the TrpB family. In terms of assembly, tetramer of two alpha and two beta chains. It depends on pyridoxal 5'-phosphate as a cofactor.

It carries out the reaction (1S,2R)-1-C-(indol-3-yl)glycerol 3-phosphate + L-serine = D-glyceraldehyde 3-phosphate + L-tryptophan + H2O. It participates in amino-acid biosynthesis; L-tryptophan biosynthesis; L-tryptophan from chorismate: step 5/5. Its function is as follows. The beta subunit is responsible for the synthesis of L-tryptophan from indole and L-serine. The polypeptide is Tryptophan synthase beta chain (Tolumonas auensis (strain DSM 9187 / NBRC 110442 / TA 4)).